Consider the following 507-residue polypeptide: ATP synthase subunit alpha, plastid (507 aa).

ATP is bound at residue 170-177 (GDRQTGKT).

Belongs to the ATPase alpha/beta chains family. In terms of assembly, F-type ATPases have 2 components, CF(1) - the catalytic core - and CF(0) - the membrane proton channel. CF(1) has five subunits: alpha(3), beta(3), gamma(1), delta(1), epsilon(1). CF(0) has four main subunits: a, b, b' and c.

The protein resides in the plastid membrane. The enzyme catalyses ATP + H2O + 4 H(+)(in) = ADP + phosphate + 5 H(+)(out). In terms of biological role, produces ATP from ADP in the presence of a proton gradient across the membrane. The alpha chain is a regulatory subunit. This is ATP synthase subunit alpha, plastid from Aneura mirabilis (Parasitic liverwort).